The following is a 109-amino-acid chain: Cortistatin (109 aa).

Residues 1–25 (MMGGRGTGGKWPSAFGLLLLWGVAA) form the signal peptide. Residues 26-93 (SALPLESGPT…PPPQQPPHLD (68 aa)) constitute a propeptide that is removed on maturation. Residues 64 to 97 (ASSSTPVGGGTPGLSKSQERPPPQQPPHLDKKPC) form a disordered region. Cysteines 97 and 108 form a disulfide.

It belongs to the somatostatin family. In terms of tissue distribution, expressed in a subset of GABAergic cells in the cortex and hippocampus.

The protein localises to the secreted. This is Cortistatin (Cort) from Mus musculus (Mouse).